The primary structure comprises 517 residues: Ribose import ATP-binding protein RbsA 2 (517 aa).

ABC transporter domains lie at 10–245 and 255–498; these read LRIE…GRSI and DAGE…VSTH. Residue 42 to 49 coordinates ATP; it reads GENGAGKS. The tract at residues 497–517 is disordered; that stretch reads THTGNSPHSGGTDGTEASRGH.

Belongs to the ABC transporter superfamily. Ribose importer (TC 3.A.1.2.1) family. In terms of assembly, the complex is composed of an ATP-binding protein (RbsA), two transmembrane proteins (RbsC) and a solute-binding protein (RbsB).

The protein resides in the cell membrane. It catalyses the reaction D-ribose(out) + ATP + H2O = D-ribose(in) + ADP + phosphate + H(+). Functionally, part of the ABC transporter complex RbsABC involved in ribose import. Responsible for energy coupling to the transport system. This chain is Ribose import ATP-binding protein RbsA 2, found in Streptomyces coelicolor (strain ATCC BAA-471 / A3(2) / M145).